The primary structure comprises 363 residues: 24-methylenesterol C-methyltransferase 2 (363 aa).

A helical transmembrane segment spans residues 6–26 (MAWTAAGVGMALVYWFVWVMG).

This sequence belongs to the class I-like SAM-binding methyltransferase superfamily. Erg6/SMT family.

It localises to the membrane. It carries out the reaction 24-methylidenelophenol + S-adenosyl-L-methionine = (Z)-24-ethylidenelophenol + S-adenosyl-L-homocysteine + H(+). It participates in steroid biosynthesis; sterol biosynthesis. In terms of biological role, catalyzes the methyl transfer from S-adenosyl-methionine to the methylene group of 24-methylene lophenol to form 24-ethylidene lophenol. This is 24-methylenesterol C-methyltransferase 2 (Smt2-1) from Oryza sativa subsp. japonica (Rice).